The following is a 505-amino-acid chain: MGETLGDSLIDPESDSFADTLSASTSQETTMVDTEMPFWPTNFGISSVDLSVMDDHSHSFDIKPFTTVDFSSISTPHYEDIPFSRADPMVADYKYDLKLQEYQSAIKVEPASPPYYSEKTQLYNKPHEEPSNSLMAIECRVCGDKASGFHYGVHACEGCKGFFRRTIRLKLIYDRCDLNCRIHKKSRNKCQYCRFQKCLAVGMSHNAIRFGRMPQAEKEKLLAEISSDIDQLNPESADLRALAKHLYDSYIKSFPLTKAKARAILTGKTTDKSPFVIYDMNSLMMGEDKIKFKHITPLQEQSKEVAIRIFQGCQFRSVEAVQEITEYAKSIPGFVNLDLNDQVTLLKYGVHEIIYTMLASLMNKDGVLISEGQGFMTREFLKSLRKPFGDFMEPKFEFAVKFNALELDDSDLAIFIAVIILSGDRPGLLNVKPIEDIQDNLLQALELQLKLNHPESSQLFAKLLQKMTDLRQIVTEHVQLLQVIKKTETDMSLHPLLQEIYKDLY.

The disordered stretch occupies residues 1–26 (MGETLGDSLIDPESDSFADTLSASTS). Over residues 17 to 26 (FADTLSASTS) the composition is skewed to polar residues. S112 is subject to Phosphoserine; by MAPK. A DNA-binding region (nuclear receptor) is located at residues 136-210 (AIECRVCGDK…VGMSHNAIRF (75 aa)). 2 consecutive NR C4-type zinc fingers follow at residues 139 to 159 (CRVC…CEGC) and 176 to 198 (CDLN…FQKC). Residues 205–280 (HNAIRFGRMP…DKSPFVIYDM (76 aa)) form an interaction with FAM120B region. Positions 238–503 (DLRALAKHLY…HPLLQEIYKD (266 aa)) constitute an NR LBD domain. K252 is covalently cross-linked (Glycyl lysine isopeptide (Lys-Gly) (interchain with G-Cter in ubiquitin)). Positions 495–503 (PLLQEIYKD) match the 9aaTAD motif.

This sequence belongs to the nuclear hormone receptor family. NR1 subfamily. In terms of assembly, interacts with FOXO1 (acetylated form). Heterodimer with other nuclear receptors, such as RXRA. The heterodimer with the retinoic acid receptor RXRA is called adipocyte-specific transcription factor ARF6. Interacts with NCOA6 coactivator, leading to a strong increase in transcription of target genes. Interacts with coactivator PPARBP, leading to a mild increase in transcription of target genes. Interacts with NOCA7 in a ligand-inducible manner. Interacts with NCOA1 and NCOA2 LXXLL motifs. Interacts with ASXL1, ASXL2, DNTTIP2, FAM120B, MAP2K1/MEK1, NR0B2, PDPK1, PRDM16, PRMT2 and TGFB1I1. Interacts (when activated by agonist) with PPP5C. Interacts with HELZ2 and THRAP3; the interaction stimulates the transcriptional activity of PPARG. Interacts with PER2, the interaction is ligand dependent and blocks PPARG recruitment to target promoters. Interacts with NOCT. Interacts with ACTN4. Interacts (when in the liganded conformation) with GPS2. Interacts with CRY1 and CRY2 in a ligand-dependent manner. In the absence of hormonal ligand, interacts with TACC1. In macrophages, interacts with PAQR3 and STUB1; the interactions promote PPARG poylubiquitination and STUB1-mediated degradation. Post-translationally, phosphorylated at basal conditions and dephosphorylated when treated with the ligand. May be dephosphorylated by PPP5C. The phosphorylated form may be inactive and dephosphorylation induces adipogenic activity. Ubiquitinated by E3 ubiquitin-protein ligase complex containing FBXO9; leading to proteasomal degradation. Ubiquitinated at Lys-252 by TRIM55 leading to proteasomal degradation. Ubiquitinated by E3 ubiquitin-protein ligase STUB1/CHIP; leading to proteasomal degradation.

Its subcellular location is the nucleus. It is found in the cytoplasm. Its activity is regulated as follows. PDPK1 activates its transcriptional activity independently of its kinase activity. Its function is as follows. Nuclear receptor that binds peroxisome proliferators such as hypolipidemic drugs and fatty acids. Once activated by a ligand, the nuclear receptor binds to DNA specific PPAR response elements (PPRE) and modulates the transcription of its target genes, such as acyl-CoA oxidase. It therefore controls the peroxisomal beta-oxidation pathway of fatty acids. Key regulator of adipocyte differentiation and glucose homeostasis. ARF6 acts as a key regulator of the tissue-specific adipocyte P2 (aP2) enhancer. Acts as a critical regulator of gut homeostasis by suppressing NF-kappa-B-mediated pro-inflammatory responses. Plays a role in the regulation of cardiovascular circadian rhythms by regulating the transcription of BMAL1 in the blood vessels. This Canis lupus familiaris (Dog) protein is Peroxisome proliferator-activated receptor gamma (PPARG).